We begin with the raw amino-acid sequence, 253 residues long: MAKAAVTKRHHFMIQKLLILLSYGYTNGLDDAHSLRCNLTIKDPTPADPLWYEAKCFVGEILILHLSNINKTMTSGDPGETANATEVKKCLTQPLKNLCQKLRNKVSNTKVDTHKTNGYPHLQVTMIYPQSQGRTPSATWEFNISDSYFFTFYTENMSWRSANDESGVIMNKWKDDGEFVKQLKFLIHECSQKMDEFLKQSKEKPRSTSRSPSITQLTSTSPLPPPSHSTSKKGFISVGLIFISLLFAFAFAM.

The signal sequence occupies residues 1-28 (MAKAAVTKRHHFMIQKLLILLSYGYTNG). Cys37 and Cys56 are joined by a disulfide. N-linked (GlcNAc...) asparagine glycans are attached at residues Asn38, Asn70, Asn83, Asn143, and Asn156. Cys90 and Cys190 are joined by a disulfide. The segment at 198–230 (LKQSKEKPRSTSRSPSITQLTSTSPLPPPSHST) is disordered. A compositionally biased stretch (low complexity) spans 211–221 (SPSITQLTSTS). A lipid anchor (GPI-anchor amidated serine) is attached at Ser229. Positions 230-253 (TSKKGFISVGLIFISLLFAFAFAM) are cleaved as a propeptide — removed in mature form.

It belongs to the NKG2D ligand family. Post-translationally, glycosylated. In terms of tissue distribution, expressed predominantly in embryonic brain.

It is found in the cell membrane. Functionally, acts as a ligand for KLRK1. The polypeptide is Retinoic acid early-inducible protein 1-beta (Raet1b) (Mus musculus (Mouse)).